The primary structure comprises 95 residues: Protein TusB (95 aa).

The protein belongs to the DsrH/TusB family. As to quaternary structure, heterohexamer, formed by a dimer of trimers. The hexameric TusBCD complex contains 2 copies each of TusB, TusC and TusD. The TusBCD complex interacts with TusE.

It is found in the cytoplasm. Part of a sulfur-relay system required for 2-thiolation of 5-methylaminomethyl-2-thiouridine (mnm(5)s(2)U) at tRNA wobble positions. This chain is Protein TusB, found in Buchnera aphidicola subsp. Acyrthosiphon pisum (strain 5A).